The chain runs to 63 residues: Actiflagelin (63 aa).

5 disulfide bridges follow: Cys3-Cys24, Cys6-Cys11, Cys17-Cys39, Cys43-Cys55, and Cys56-Cys61. Pro63 is subject to Proline amide.

Contains 5 disulfide bonds. Expressed by the venom gland.

It is found in the secreted. Its function is as follows. Unknown. In vitro, this toxin activates sperm motility when tested on OF1 male mice. In Walterinnesia aegyptia (Desert black snake), this protein is Actiflagelin.